We begin with the raw amino-acid sequence, 143 residues long: Anti-sigma F factor (143 aa).

It belongs to the anti-sigma-factor family.

It catalyses the reaction L-seryl-[protein] + ATP = O-phospho-L-seryl-[protein] + ADP + H(+). The catalysed reaction is L-threonyl-[protein] + ATP = O-phospho-L-threonyl-[protein] + ADP + H(+). Functionally, binds to sigma F and blocks its ability to form an RNA polymerase holoenzyme (E-sigma F). Phosphorylates SpoIIAA on a serine residue. This phosphorylation may enable SpoIIAA to act as an anti-anti-sigma factor that counteracts SpoIIAB and thus releases sigma F from inhibition. The polypeptide is Anti-sigma F factor (Clostridium beijerinckii (strain ATCC 51743 / NCIMB 8052) (Clostridium acetobutylicum)).